We begin with the raw amino-acid sequence, 426 residues long: Phosphomethylpyrimidine synthase (426 aa).

Residues N65, M94, Y123, H162, 184–186, 225–228, and E264 each bind substrate; these read SRG and DGMR. H268 is a Zn(2+) binding site. A substrate-binding site is contributed by Y291. Zn(2+) is bound at residue H332. Residues C408, C411, and C415 each coordinate [4Fe-4S] cluster.

The protein belongs to the ThiC family. It depends on [4Fe-4S] cluster as a cofactor.

The enzyme catalyses 5-amino-1-(5-phospho-beta-D-ribosyl)imidazole + S-adenosyl-L-methionine = 4-amino-2-methyl-5-(phosphooxymethyl)pyrimidine + CO + 5'-deoxyadenosine + formate + L-methionine + 3 H(+). The protein operates within cofactor biosynthesis; thiamine diphosphate biosynthesis. Catalyzes the synthesis of the hydroxymethylpyrimidine phosphate (HMP-P) moiety of thiamine from aminoimidazole ribotide (AIR) in a radical S-adenosyl-L-methionine (SAM)-dependent reaction. The chain is Phosphomethylpyrimidine synthase from Methanocaldococcus jannaschii (strain ATCC 43067 / DSM 2661 / JAL-1 / JCM 10045 / NBRC 100440) (Methanococcus jannaschii).